The following is a 70-amino-acid chain: Cytochrome c oxidase subunit 8B, mitochondrial (70 aa).

Residues 1-24 (MLRLAPTVRLLQAPLRGWAVPKAH) constitute a mitochondrion transit peptide. The Mitochondrial matrix portion of the chain corresponds to 25 to 35 (ITAKPAKTPTS). The chain crosses the membrane as a helical span at residues 36–59 (PKEQAIGLSVTFLSFLLPAGWVLY). The Mitochondrial intermembrane segment spans residues 60-70 (HLDNYKKSSAA).

Belongs to the cytochrome c oxidase VIII family. Component of the cytochrome c oxidase (complex IV, CIV), a multisubunit enzyme composed of 14 subunits. The complex is composed of a catalytic core of 3 subunits MT-CO1, MT-CO2 and MT-CO3, encoded in the mitochondrial DNA, and 11 supernumerary subunits COX4I1 (or COX4I2), COX5A, COX5B, COX6A2 (or COX6A1), COX6B1 (or COX6B2), COX6C, COX7A1 (or COX7A2), COX7B, COX7C, COX8B and NDUFA4, which are encoded in the nuclear genome. The complex exists as a monomer or a dimer and forms supercomplexes (SCs) in the inner mitochondrial membrane with NADH-ubiquinone oxidoreductase (complex I, CI) and ubiquinol-cytochrome c oxidoreductase (cytochrome b-c1 complex, complex III, CIII), resulting in different assemblies (supercomplex SCI(1)III(2)IV(1) and megacomplex MCI(2)III(2)IV(2)).

It localises to the mitochondrion inner membrane. The protein operates within energy metabolism; oxidative phosphorylation. Component of the cytochrome c oxidase, the last enzyme in the mitochondrial electron transport chain which drives oxidative phosphorylation. The respiratory chain contains 3 multisubunit complexes succinate dehydrogenase (complex II, CII), ubiquinol-cytochrome c oxidoreductase (cytochrome b-c1 complex, complex III, CIII) and cytochrome c oxidase (complex IV, CIV), that cooperate to transfer electrons derived from NADH and succinate to molecular oxygen, creating an electrochemical gradient over the inner membrane that drives transmembrane transport and the ATP synthase. Cytochrome c oxidase is the component of the respiratory chain that catalyzes the reduction of oxygen to water. Electrons originating from reduced cytochrome c in the intermembrane space (IMS) are transferred via the dinuclear copper A center (CU(A)) of subunit 2 and heme A of subunit 1 to the active site in subunit 1, a binuclear center (BNC) formed by heme A3 and copper B (CU(B)). The BNC reduces molecular oxygen to 2 water molecules using 4 electrons from cytochrome c in the IMS and 4 protons from the mitochondrial matrix. The polypeptide is Cytochrome c oxidase subunit 8B, mitochondrial (COX8B) (Bos taurus (Bovine)).